The following is a 260-amino-acid chain: MMLEVPRYTWRSPSNIKVVAEPGLGPGRWLLPGAHQPSCPPAPHQGPLQKPSQSAPGPTASASAPPRPRRRPPPQRPHRCPDCDKAFSYPSKLATHRLAHGGARPHPCPDCPKAFSYPSKLAAHRLTHSGARPHPCPHCPKAFGHRSKLAAHLWTHAPTRPYPCPDCPKSFCYPSKLAAHRHTHHATDARPYPCPHCPKAFSFPSKLAAHRLCHDPPTAPGSQATARHRCSSCGQAFGQRRLLLLHQRSHHQVEHKGERD.

The tract at residues 22–81 (PGLGPGRWLLPGAHQPSCPPAPHQGPLQKPSQSAPGPTASASAPPRPRRRPPPQRPHRCP) is disordered. The span at 51–64 (PSQSAPGPTASASA) shows a compositional bias: low complexity. Residues 67 to 78 (RPRRRPPPQRPH) show a composition bias toward basic residues. C2H2-type zinc fingers lie at residues 78-100 (HRCP…RLAH), 106-128 (HPCP…RLTH), 134-156 (HPCP…LWTH), 162-184 (YPCP…RHTH), 192-214 (YPCP…RLCH), and 228-255 (HRCS…QVEH).

Belongs to the krueppel C2H2-type zinc-finger protein family.

It is found in the nucleus. Functionally, may be involved in transcriptional regulation. The protein is Zinc finger protein 575 (ZNF575) of Macaca fascicularis (Crab-eating macaque).